We begin with the raw amino-acid sequence, 223 residues long: Adenylate kinase (223 aa).

17–22 (GAGKGT) provides a ligand contact to ATP. The segment at 37 to 66 (STGDMLRSQVAKGTPLGVEAKKIMDQGGLV) is NMP. AMP contacts are provided by residues Thr-38, Arg-43, 64–66 (GLV), 93–96 (GFPR), and Gln-100. The interval 134 to 171 (GRLVHPSSGRSYHKLFNPPKVEMTDDVTGEPLVQRSDD) is LID. Residues Arg-135 and 144–145 (SY) each bind ATP. The AMP site is built by Arg-168 and Arg-179. Gln-207 provides a ligand contact to ATP.

This sequence belongs to the adenylate kinase family. AK2 subfamily. As to quaternary structure, monomer.

The protein resides in the cytoplasm. It localises to the cytosol. The protein localises to the mitochondrion intermembrane space. The catalysed reaction is AMP + ATP = 2 ADP. Its function is as follows. Catalyzes the reversible transfer of the terminal phosphate group between ATP and AMP. Plays an important role in cellular energy homeostasis and in adenine nucleotide metabolism. Adenylate kinase activity is critical for regulation of the phosphate utilization and the AMP de novo biosynthesis pathways. The sequence is that of Adenylate kinase from Vanderwaltozyma polyspora (strain ATCC 22028 / DSM 70294 / BCRC 21397 / CBS 2163 / NBRC 10782 / NRRL Y-8283 / UCD 57-17) (Kluyveromyces polysporus).